The following is a 585-amino-acid chain: Beta-(1--&gt;2)glucan export ATP-binding/permease protein NdvA (585 aa).

An ABC transmembrane type-1 domain is found at 21–301 (VGAIVIANIV…MKAFATQIFE (281 aa)). Helical transmembrane passes span 22–42 (GAIV…PILF), 55–75 (VAPM…AFVL), 136–156 (QHLA…AMDV), 158–178 (LSLI…VVMS), 245–265 (LNRI…TVLV), and 269–289 (ELGV…IGRL). The ABC transporter domain maps to 335 to 569 (VEFRDISFDF…NGRFAALLRA (235 aa)). Residue 368–375 (GPTGAGKT) coordinates ATP.

It belongs to the ABC transporter superfamily. Beta-(1--&gt;2)glucan exporter (TC 3.A.1.108.1) family. In terms of assembly, homodimer.

It is found in the cell inner membrane. It catalyses the reaction [(1-&gt;2)-beta-D-glucosyl](n)(in) + ATP + H2O = [(1-&gt;2)-beta-D-glucosyl](n)(out) + ADP + phosphate + H(+). In terms of biological role, involved in beta-(1--&gt;2)glucan export which is required for nodulation of legume roots. May be involved in other classes of oligosaccharides export. Transmembrane domains (TMD) form a pore in the inner membrane and the ATP-binding domain (NBD) is responsible for energy generation. The sequence is that of Beta-(1--&gt;2)glucan export ATP-binding/permease protein NdvA from Rhizobium meliloti (strain 1021) (Ensifer meliloti).